Consider the following 445-residue polypeptide: Phosphoglucosamine mutase (445 aa).

The Phosphoserine intermediate role is filled by Ser-102. Mg(2+) contacts are provided by Ser-102, Asp-241, Asp-243, and Asp-245. Ser-102 carries the phosphoserine modification.

This sequence belongs to the phosphohexose mutase family. Mg(2+) serves as cofactor. In terms of processing, activated by phosphorylation.

The enzyme catalyses alpha-D-glucosamine 1-phosphate = D-glucosamine 6-phosphate. Catalyzes the conversion of glucosamine-6-phosphate to glucosamine-1-phosphate. In Zymomonas mobilis subsp. mobilis (strain ATCC 31821 / ZM4 / CP4), this protein is Phosphoglucosamine mutase.